The following is a 162-amino-acid chain: HTH-type transcriptional regulator IscR (162 aa).

The HTH rrf2-type domain occupies Arg-2–Asn-131. A DNA-binding region (H-T-H motif) is located at residues Leu-28 to Lys-51. [2Fe-2S] cluster is bound by residues Cys-92, Cys-98, and Cys-104.

The cofactor is [2Fe-2S] cluster.

Functionally, regulates the transcription of several operons and genes involved in the biogenesis of Fe-S clusters and Fe-S-containing proteins. The chain is HTH-type transcriptional regulator IscR from Shigella sonnei (strain Ss046).